We begin with the raw amino-acid sequence, 300 residues long: MHFQDIITTLNSFWADQGCVLLQPYDTEKGAGTMSPHTVLRAIGPEPWAVAYPEPCRRPTDGRYGDNPNRAQHYFQYQVLIKPSPVGIQETYLASLEALGVCTAEHDIRFVEDNWESPTLGAWGVGWEVWLDGMEVTQFTYFQQCGGLDCSPVPIEITYGIERLAMYLQNVENIWDLSWNNKRSYGDIWLSLEKGQCDFNFESSDPSRLKQLFDLYEAEASDLIAKQLPAPALDFVLKCSHTFNLLEARGVISVTERTATIGRIRSLARGVAEAWLTEREAMGFPLLNNKALPLDQPLQS.

It belongs to the class-II aminoacyl-tRNA synthetase family. In terms of assembly, tetramer of two alpha and two beta subunits.

Its subcellular location is the cytoplasm. The catalysed reaction is tRNA(Gly) + glycine + ATP = glycyl-tRNA(Gly) + AMP + diphosphate. The protein is Glycine--tRNA ligase alpha subunit of Prochlorococcus marinus (strain MIT 9313).